The sequence spans 155 residues: Small ribosomal subunit protein bS6 (155 aa).

A compositionally biased stretch (basic and acidic residues) spans 115-137 (EADAAKAEADAARVEAEAKKAET). Positions 115 to 155 (EADAAKAEADAARVEAEAKKAETDETDETVDAETPENEEEN) are disordered. A compositionally biased stretch (acidic residues) spans 138 to 155 (DETDETVDAETPENEEEN).

This sequence belongs to the bacterial ribosomal protein bS6 family.

In terms of biological role, binds together with bS18 to 16S ribosomal RNA. This is Small ribosomal subunit protein bS6 from Desulforapulum autotrophicum (strain ATCC 43914 / DSM 3382 / VKM B-1955 / HRM2) (Desulfobacterium autotrophicum).